Consider the following 352-residue polypeptide: Holliday junction branch migration complex subunit RuvB (352 aa).

The interval 4–185 (ADRLIAATGP…FGIVQRLEFY (182 aa)) is large ATPase domain (RuvB-L). Residues Ile-24, Arg-25, Gly-66, Lys-69, Thr-70, Thr-71, 132–134 (EDF), Arg-175, Tyr-185, and Arg-222 contribute to the ATP site. Thr-70 contacts Mg(2+). Residues 186-256 (STADLATIVS…VADLALNLLD (71 aa)) form a small ATPAse domain (RuvB-S) region. The interval 259 to 352 (EHGFDHQDRR…VDEFLDAVDD (94 aa)) is head domain (RuvB-H). DNA is bound by residues Arg-295, Arg-314, and Arg-319.

Belongs to the RuvB family. In terms of assembly, homohexamer. Forms an RuvA(8)-RuvB(12)-Holliday junction (HJ) complex. HJ DNA is sandwiched between 2 RuvA tetramers; dsDNA enters through RuvA and exits via RuvB. An RuvB hexamer assembles on each DNA strand where it exits the tetramer. Each RuvB hexamer is contacted by two RuvA subunits (via domain III) on 2 adjacent RuvB subunits; this complex drives branch migration. In the full resolvosome a probable DNA-RuvA(4)-RuvB(12)-RuvC(2) complex forms which resolves the HJ.

Its subcellular location is the cytoplasm. The enzyme catalyses ATP + H2O = ADP + phosphate + H(+). In terms of biological role, the RuvA-RuvB-RuvC complex processes Holliday junction (HJ) DNA during genetic recombination and DNA repair, while the RuvA-RuvB complex plays an important role in the rescue of blocked DNA replication forks via replication fork reversal (RFR). RuvA specifically binds to HJ cruciform DNA, conferring on it an open structure. The RuvB hexamer acts as an ATP-dependent pump, pulling dsDNA into and through the RuvAB complex. RuvB forms 2 homohexamers on either side of HJ DNA bound by 1 or 2 RuvA tetramers; 4 subunits per hexamer contact DNA at a time. Coordinated motions by a converter formed by DNA-disengaged RuvB subunits stimulates ATP hydrolysis and nucleotide exchange. Immobilization of the converter enables RuvB to convert the ATP-contained energy into a lever motion, pulling 2 nucleotides of DNA out of the RuvA tetramer per ATP hydrolyzed, thus driving DNA branch migration. The RuvB motors rotate together with the DNA substrate, which together with the progressing nucleotide cycle form the mechanistic basis for DNA recombination by continuous HJ branch migration. Branch migration allows RuvC to scan DNA until it finds its consensus sequence, where it cleaves and resolves cruciform DNA. This chain is Holliday junction branch migration complex subunit RuvB, found in Pseudomonas fluorescens (strain SBW25).